The sequence spans 454 residues: tRNA modification GTPase MnmE (454 aa).

(6S)-5-formyl-5,6,7,8-tetrahydrofolate is bound by residues R23, E80, and K120. One can recognise a TrmE-type G domain in the interval 216 to 377 (GMRVVIAGRP…VREHLKACIG (162 aa)). N226 is a K(+) binding site. GTP is bound by residues 226 to 231 (NAGKSS), 245 to 251 (TEIAGTT), 270 to 273 (DTAG), and 335 to 338 (NKAD). A Mg(2+)-binding site is contributed by S230. Residues T245, I247, and T250 each contribute to the K(+) site. Residue T251 participates in Mg(2+) binding. K454 contacts (6S)-5-formyl-5,6,7,8-tetrahydrofolate.

Belongs to the TRAFAC class TrmE-Era-EngA-EngB-Septin-like GTPase superfamily. TrmE GTPase family. Homodimer. Heterotetramer of two MnmE and two MnmG subunits. K(+) is required as a cofactor.

The protein resides in the cytoplasm. Its function is as follows. Exhibits a very high intrinsic GTPase hydrolysis rate. Involved in the addition of a carboxymethylaminomethyl (cmnm) group at the wobble position (U34) of certain tRNAs, forming tRNA-cmnm(5)s(2)U34. The protein is tRNA modification GTPase MnmE of Pseudoalteromonas translucida (strain TAC 125).